A 295-amino-acid polypeptide reads, in one-letter code: ATP synthase gamma chain (295 aa).

This sequence belongs to the ATPase gamma chain family. F-type ATPases have 2 components, CF(1) - the catalytic core - and CF(0) - the membrane proton channel. CF(1) has five subunits: alpha(3), beta(3), gamma(1), delta(1), epsilon(1). CF(0) has three main subunits: a, b and c.

Its subcellular location is the cell inner membrane. Produces ATP from ADP in the presence of a proton gradient across the membrane. The gamma chain is believed to be important in regulating ATPase activity and the flow of protons through the CF(0) complex. This is ATP synthase gamma chain from Aliarcobacter butzleri (strain RM4018) (Arcobacter butzleri).